A 621-amino-acid polypeptide reads, in one-letter code: pH-response transcription factor pacc-1 (621 aa).

Over residues 1 to 14 the composition is skewed to polar residues; the sequence is MSSTPAQENGTVNG. The interval 1-87 is disordered; the sequence is MSSTPAQENG…PTTASNSSAP (87 aa). Positions 15 to 87 are enriched in low complexity; it reads ANAAPAPAPA…PTTASNSSAP (73 aa). C2H2-type zinc fingers lie at residues 95–120, 131–155, and 161–183; these read LVCR…CEKH, LTCQ…VRVH, and HKCD…VKTH. Disordered stretches follow at residues 395–539 and 566–621; these read PTYA…PETY and DEDD…PRIN. 2 stretches are compositionally biased toward low complexity: residues 409 to 423 and 436 to 465; these read ASLA…PHSA and SYTS…VSYP. Residues 464-467 carry the YPX[LI] motif 1 motif; sequence YPTL. The span at 476 to 486 shows a compositional bias: polar residues; sequence PSTSGLGSNFT. Basic and acidic residues predominate over residues 502–511; the sequence is RAADEADRAP. A compositionally biased stretch (polar residues) spans 515-525; it reads ASEQATVSSPS. Residues 583 to 595 show a composition bias toward low complexity; it reads RNQQQRNQQQQQQ. The short motif at 614 to 617 is the YPX[LI] motif 2 element; it reads YPVL.

Belongs to the pacC/RIM101 family. In terms of assembly, binds to DNA. Interacts with palA/prr-1, which binds to the two YPX[LI] motifs and is required for proteolytic processing. Post-translationally, activated by C-terminal proteolytic cleavage by signaling protease (probably palB/RIM13) at neutral to alkaline ambient pH.

The protein resides in the cytoplasm. It localises to the nucleus. Transcription factor that mediates regulation of both acid- and alkaline-expressed genes in response to ambient pH. At alkaline ambient pH, activates transcription of alkaline-expressed genes (including pacc-1 itself) and represses transcription of acid-expressed genes. The chain is pH-response transcription factor pacc-1 (pacc-1) from Neurospora crassa (strain ATCC 24698 / 74-OR23-1A / CBS 708.71 / DSM 1257 / FGSC 987).